The primary structure comprises 320 residues: SUN domain-containing protein 3 (320 aa).

The Nuclear segment spans residues 1–6 (MLTRSW). Residues 7–29 (KIILSTVFISTFLLVGLLNHQWL) traverse the membrane as a helical segment. Residues 30 to 320 (KETEFPQKPR…RVHGIPSDYT (291 aa)) are Perinuclear space-facing. Residues 63–102 (KEQQELLKKESQTLENNFREILFLIEQIDVLKALLKDMKD) are a coiled coil. The 162-residue stretch at 156–317 (GASVIEAGTS…YRFRVHGIPS (162 aa)) folds into the SUN domain.

In terms of assembly, self-associates. Interacts with SYNE1 and SPAG4/SUN4. Proposed to form a spermatogenesis-specific LINC complex with SYNE1 during sperm head formation possibly implicating a SUN domain-based heterotrimer with SPAG4/SUN4 associating with SYNE1. Can interact with SYNE3; the interaction is questioned by missing colocalization in spermatids. As to expression, specifically expressed in testis (at protein level).

Its subcellular location is the membrane. It localises to the nucleus envelope. The protein localises to the nucleus inner membrane. Functionally, as a probable component of the LINC (LInker of Nucleoskeleton and Cytoskeleton) complex, involved in the connection between the nuclear lamina and the cytoskeleton. The nucleocytoplasmic interactions established by the LINC complex play an important role in the transmission of mechanical forces across the nuclear envelope and in nuclear movement and positioning. May be involved in nuclear remodeling during sperm head formation in spermatogenesis. A probable SUN3:SYNE1 LINC complex may tether spermatid nuclei to posterior cytoskeletal structures such as the manchette. The protein is SUN domain-containing protein 3 (Sun3) of Mus musculus (Mouse).